We begin with the raw amino-acid sequence, 804 residues long: Leucine--tRNA ligase (804 aa).

Residues 40-51 (PYPSGAGLHVGH) carry the 'HIGH' region motif. The 'KMSKS' region motif lies at 576–580 (KMSKS). Lysine 579 contacts ATP.

This sequence belongs to the class-I aminoacyl-tRNA synthetase family.

Its subcellular location is the cytoplasm. The enzyme catalyses tRNA(Leu) + L-leucine + ATP = L-leucyl-tRNA(Leu) + AMP + diphosphate. This is Leucine--tRNA ligase from Bacillus pumilus (strain SAFR-032).